A 253-amino-acid polypeptide reads, in one-letter code: 4-phosphopantoate--beta-alanine ligase (253 aa).

ATP contacts are provided by residues Arg-17, Arg-39, 179-181, 185-186, and 197-198; these read DLN, RT, and NL.

Belongs to the archaeal phosphopantothenate synthetase family. As to quaternary structure, homodimer.

The catalysed reaction is (R)-4-phosphopantoate + beta-alanine + ATP = (R)-4'-phosphopantothenate + AMP + diphosphate + H(+). It participates in cofactor biosynthesis; coenzyme A biosynthesis. Its function is as follows. Catalyzes the condensation of (R)-4-phosphopantoate and beta-alanine to 4'-phosphopantothenate in the CoA biosynthesis pathway. This Methanosarcina mazei (strain ATCC BAA-159 / DSM 3647 / Goe1 / Go1 / JCM 11833 / OCM 88) (Methanosarcina frisia) protein is 4-phosphopantoate--beta-alanine ligase.